Here is an 822-residue protein sequence, read N- to C-terminus: Valine--tRNA ligase (822 aa).

Residues 41–51 (PNVTGQLHLGH) carry the 'HIGH' region motif. The 'KMSKS' region motif lies at 511-515 (KMSKS). Lys514 contacts ATP. Residues 765-822 (EQKGRELKEIQFLKSEILRAEKILTNKGFLEKAPREKIDLERTKLEKLKEKLAFYEKK) adopt a coiled-coil conformation.

Belongs to the class-I aminoacyl-tRNA synthetase family. ValS type 1 subfamily. In terms of assembly, monomer.

The protein localises to the cytoplasm. The enzyme catalyses tRNA(Val) + L-valine + ATP = L-valyl-tRNA(Val) + AMP + diphosphate. In terms of biological role, catalyzes the attachment of valine to tRNA(Val). As ValRS can inadvertently accommodate and process structurally similar amino acids such as threonine, to avoid such errors, it has a 'posttransfer' editing activity that hydrolyzes mischarged Thr-tRNA(Val) in a tRNA-dependent manner. The chain is Valine--tRNA ligase from Mesomycoplasma hyopneumoniae (strain 7448) (Mycoplasma hyopneumoniae).